A 320-amino-acid polypeptide reads, in one-letter code: ATP-dependent 6-phosphofructokinase (320 aa).

Residue Gly-12 coordinates ATP. ADP-binding positions include 22–26 (RGVVR) and 55–60 (RYSVSD). Residues 73–74 (RF) and 103–106 (GDGS) contribute to the ATP site. Asp-104 is a binding site for Mg(2+). 126 to 128 (TID) contributes to the substrate binding site. Catalysis depends on Asp-128, which acts as the Proton acceptor. An ADP-binding site is contributed by Arg-155. Residues Arg-163 and 170–172 (MGR) contribute to the substrate site. ADP-binding positions include 186–188 (GCE), Lys-212, and 214–216 (KKH). Substrate-binding positions include Glu-223, Arg-244, and 250–253 (HIQR).

This sequence belongs to the phosphofructokinase type A (PFKA) family. ATP-dependent PFK group I subfamily. Prokaryotic clade 'B1' sub-subfamily. In terms of assembly, homotetramer. Mg(2+) is required as a cofactor.

Its subcellular location is the cytoplasm. It carries out the reaction beta-D-fructose 6-phosphate + ATP = beta-D-fructose 1,6-bisphosphate + ADP + H(+). It participates in carbohydrate degradation; glycolysis; D-glyceraldehyde 3-phosphate and glycerone phosphate from D-glucose: step 3/4. With respect to regulation, allosterically activated by ADP and other diphosphonucleosides, and allosterically inhibited by phosphoenolpyruvate. Catalyzes the phosphorylation of D-fructose 6-phosphate to fructose 1,6-bisphosphate by ATP, the first committing step of glycolysis. The protein is ATP-dependent 6-phosphofructokinase of Pectobacterium carotovorum subsp. carotovorum (strain PC1).